The primary structure comprises 336 residues: Alcohol dehydrogenase (336 aa).

7 residues coordinate Zn(2+): Cys37, His58, Cys89, Cys92, Cys95, Cys103, and Cys145.

This sequence belongs to the zinc-containing alcohol dehydrogenase family. Zn(2+) is required as a cofactor.

The enzyme catalyses a primary alcohol + NAD(+) = an aldehyde + NADH + H(+). It carries out the reaction a secondary alcohol + NAD(+) = a ketone + NADH + H(+). The chain is Alcohol dehydrogenase (adh) from Staphylococcus aureus (strain USA300).